We begin with the raw amino-acid sequence, 66 residues long: Large ribosomal subunit protein bL33c (66 aa).

This sequence belongs to the bacterial ribosomal protein bL33 family.

The protein resides in the plastid. It is found in the chloroplast. This is Large ribosomal subunit protein bL33c from Eucalyptus globulus subsp. globulus (Tasmanian blue gum).